A 287-amino-acid polypeptide reads, in one-letter code: MSTINLPLNLTVRVHPVVLFQIVDAYERRNADSERVIGTLLGSVEKGIVEVTNCFCVPHKEHADQVEAELGYASDLYDLNRRVNPSENIVGWWATGQEVTNHSSVIHEYYARECNNPIHLTLDTSLTAARMGIKAYVCVSLGVPGGKTGCMFTPINVEVTSYEPEVVGLSLCAKTIGVQSNPARPRTVSPMLDLAQVSEASGKLQTLLGEVLNYVEDVLAEKQQPDNFVGRALLDLIHSVPNMKHEEFAKMFNSNVKDLLMVVTLSQLIKTQLQLNEKLTSLTSFLS.

Residues 12–142 enclose the MPN domain; sequence VRVHPVVLFQ…IKAYVCVSLG (131 aa).

The protein belongs to the eIF-3 subunit F family. In terms of assembly, component of the eukaryotic translation initiation factor 3 (eIF-3) complex.

The protein resides in the cytoplasm. Component of the eukaryotic translation initiation factor 3 (eIF-3) complex, which is involved in protein synthesis of a specialized repertoire of mRNAs and, together with other initiation factors, stimulates binding of mRNA and methionyl-tRNAi to the 40S ribosome. The eIF-3 complex specifically targets and initiates translation of a subset of mRNAs involved in cell proliferation. The chain is Eukaryotic translation initiation factor 3 subunit F from Culex quinquefasciatus (Southern house mosquito).